Reading from the N-terminus, the 479-residue chain is Anaerobic nitric oxide reductase flavorubredoxin (479 aa).

Positions 30-210 are zinc metallo-hydrolase; the sequence is LRGSSYNSYL…PFSRLVTPKI (181 aa). His-79, Glu-81, Asp-83, His-147, Asp-166, and His-227 together coordinate Fe cation. One can recognise a Flavodoxin-like domain in the interval 254–393; sequence ITIFYDTMSN…LCRQHGRDIA (140 aa). FMN is bound by residues 260-264 and 342-369; these read TMSNN and AFGS…EMSL. The Rubredoxin-like domain maps to 423-474; sequence GPKMQCSVCQWIYDPAQGEPLQDVAPGTPWSDVPDNFLCPECSLGKDVFDVL. 4 residues coordinate Fe cation: Cys-428, Cys-431, Cys-461, and Cys-464.

This sequence in the N-terminal section; belongs to the zinc metallo-hydrolase group 3 family. Homotetramer. The cofactor is Fe cation. Requires FMN as cofactor.

It is found in the cytoplasm. The protein operates within nitrogen metabolism; nitric oxide reduction. In terms of biological role, anaerobic nitric oxide reductase; uses NADH to detoxify nitric oxide (NO), protecting several 4Fe-4S NO-sensitive enzymes. Has at least 2 reductase partners, only one of which (NorW, flavorubredoxin reductase) has been identified. NO probably binds to the di-iron center; electrons enter from the NorW at rubredoxin and are transferred sequentially to the FMN center and the di-iron center. Also able to function as an aerobic oxygen reductase. The chain is Anaerobic nitric oxide reductase flavorubredoxin from Salmonella choleraesuis (strain SC-B67).